A 593-amino-acid chain; its full sequence is Proteasome-associated ATPase (593 aa).

A coiled-coil region spans residues 5-94 (DDADSRAARW…KEEIDRLAQP (90 aa)). Residue 281–286 (GCGKTL) coordinates ATP. A disordered region spans residues 574–593 (GKGADAGRSIETASNTGQYL). Over residues 584–593 (ETASNTGQYL) the composition is skewed to polar residues. The interval 592 to 593 (YL) is docks into pockets in the proteasome alpha-ring.

This sequence belongs to the AAA ATPase family. As to quaternary structure, homohexamer. Assembles into a hexameric ring structure that caps the 20S proteasome core. Strongly interacts with the prokaryotic ubiquitin-like protein Pup through a hydrophobic interface; the interacting region of ARC lies in its N-terminal coiled-coil domain. There is one Pup binding site per ARC hexamer ring. Upon ATP-binding, the C-terminus of ARC interacts with the alpha-rings of the proteasome core, possibly by binding to the intersubunit pockets.

The protein operates within protein degradation; proteasomal Pup-dependent pathway. ATPase which is responsible for recognizing, binding, unfolding and translocation of pupylated proteins into the bacterial 20S proteasome core particle. May be essential for opening the gate of the 20S proteasome via an interaction with its C-terminus, thereby allowing substrate entry and access to the site of proteolysis. Thus, the C-termini of the proteasomal ATPase may function like a 'key in a lock' to induce gate opening and therefore regulate proteolysis. This Salinispora tropica (strain ATCC BAA-916 / DSM 44818 / JCM 13857 / NBRC 105044 / CNB-440) protein is Proteasome-associated ATPase.